The following is a 660-amino-acid chain: Oligopeptide-binding protein AliA (660 aa).

The signal sequence occupies residues 1 to 22 (MKSSKLFALAGVTLLAATTLAA). Residue Cys23 is the site of N-palmitoyl cysteine attachment. Cys23 is lipidated: S-diacylglycerol cysteine. Positions 638 to 660 (EKWMKEKEESNKKAQEDLAKHVK) are disordered.

Belongs to the bacterial solute-binding protein 5 family.

The protein resides in the cell membrane. Functionally, part of the binding-protein-dependent transport system for oligopeptides; probably an oligopeptide binding protein. The protein is Oligopeptide-binding protein AliA (aliA) of Streptococcus pneumoniae serotype 4 (strain ATCC BAA-334 / TIGR4).